A 192-amino-acid chain; its full sequence is dITP/XTP pyrophosphatase (192 aa).

Threonine 12–lysine 17 lines the substrate pocket. Mg(2+)-binding residues include glutamate 41 and aspartate 70. Aspartate 70 (proton acceptor) is an active-site residue. Substrate contacts are provided by residues serine 71, phenylalanine 145–aspartate 148, lysine 168, and histidine 173–arginine 174.

This sequence belongs to the HAM1 NTPase family. As to quaternary structure, homodimer. Requires Mg(2+) as cofactor.

The catalysed reaction is XTP + H2O = XMP + diphosphate + H(+). It catalyses the reaction dITP + H2O = dIMP + diphosphate + H(+). The enzyme catalyses ITP + H2O = IMP + diphosphate + H(+). In terms of biological role, pyrophosphatase that catalyzes the hydrolysis of nucleoside triphosphates to their monophosphate derivatives, with a high preference for the non-canonical purine nucleotides XTP (xanthosine triphosphate), dITP (deoxyinosine triphosphate) and ITP. Seems to function as a house-cleaning enzyme that removes non-canonical purine nucleotides from the nucleotide pool, thus preventing their incorporation into DNA/RNA and avoiding chromosomal lesions. The chain is dITP/XTP pyrophosphatase from Saccharolobus solfataricus (strain ATCC 35092 / DSM 1617 / JCM 11322 / P2) (Sulfolobus solfataricus).